The sequence spans 332 residues: D-alanine--D-alanine ligase (332 aa).

Positions 1-17 are enriched in polar residues; that stretch reads MPMTMTQSATNPTATPV. The segment at 1–28 is disordered; the sequence is MPMTMTQSATNPTATPVSANKASANAAT. Low complexity predominate over residues 18–28; it reads SANKASANAAT. The 198-residue stretch at 132–329 folds into the ATP-grasp domain; sequence KQLWHGCGLS…FEQLCWHILA (198 aa). 158 to 213 is an ATP binding site; it reads VNTLGLPLIVKPVHEGSSIGMSKVNTLDELPKAYEVAAGCGDVVMAEKWITGREFT. Mg(2+) contacts are provided by Asp283, Glu296, and Asn298.

This sequence belongs to the D-alanine--D-alanine ligase family. Mg(2+) is required as a cofactor. Mn(2+) serves as cofactor.

Its subcellular location is the cytoplasm. It carries out the reaction 2 D-alanine + ATP = D-alanyl-D-alanine + ADP + phosphate + H(+). It participates in cell wall biogenesis; peptidoglycan biosynthesis. Its function is as follows. Cell wall formation. In Psychrobacter sp. (strain PRwf-1), this protein is D-alanine--D-alanine ligase.